The chain runs to 413 residues: Sprouty-related, EVH1 domain-containing protein 2 (413 aa).

A WH1 domain is found at 5 to 122 (THPNDDSYIV…RGVRKALEDL (118 aa)). Residues 122 to 163 (LTEGSTTSSSTLQNEAELGDDDVFTTATDSSSNSSQKKDHST) form a disordered region. Positions 195 to 248 (FSRNLFPFEDEEIVRINPRERWMITGYEDYRYAAVPDKFIQPEDSDSYVQISKN) constitute a KBD domain. Positions 303-411 (RCVYCRDMFN…CGCCGGKHKA (109 aa)) constitute an SPR domain.

It localises to the cell membrane. The protein resides in the cytoplasmic vesicle. The protein localises to the secretory vesicle membrane. It is found in the cytoplasm. Functionally, negatively regulates Ras signaling pathways and downstream activation of MAP kinases. The polypeptide is Sprouty-related, EVH1 domain-containing protein 2 (spred2) (Danio rerio (Zebrafish)).